A 466-amino-acid chain; its full sequence is Asparagine--tRNA ligase (466 aa).

The protein belongs to the class-II aminoacyl-tRNA synthetase family. In terms of assembly, homodimer.

It is found in the cytoplasm. The catalysed reaction is tRNA(Asn) + L-asparagine + ATP = L-asparaginyl-tRNA(Asn) + AMP + diphosphate + H(+). The polypeptide is Asparagine--tRNA ligase (Escherichia coli O139:H28 (strain E24377A / ETEC)).